The chain runs to 744 residues: FNIP repeat-containing protein cigB (744 aa).

FNIP repeat units lie at residues 340–376 (FNQK…TVTT), 383–422 (FNQK…TVIL), 426–462 (FNQK…TVTR), 469–508 (FNQK…TITL), 512–550 (FNQK…TTVR), 555–594 (FNQK…TVIL), 598–635 (FNQK…VTTV), 641–678 (FNQK…VTTV), and 684–723 (FNQK…NVYI).

This is FNIP repeat-containing protein cigB (cigB) from Dictyostelium discoideum (Social amoeba).